Here is a 437-residue protein sequence, read N- to C-terminus: Glutamyl-tRNA reductase (437 aa).

Substrate is bound by residues 46–49 (TCNR), S111, 116–118 (ERE), and Q122. Catalysis depends on C47, which acts as the Nucleophile. 192-197 (GTGAYA) contributes to the NADP(+) binding site. The interval 413–437 (PDVPEETAPSTRQDPSDTPRPRAVG) is disordered. Residues 426-437 (DPSDTPRPRAVG) show a composition bias toward basic and acidic residues.

The protein belongs to the glutamyl-tRNA reductase family. As to quaternary structure, homodimer.

The catalysed reaction is (S)-4-amino-5-oxopentanoate + tRNA(Glu) + NADP(+) = L-glutamyl-tRNA(Glu) + NADPH + H(+). The protein operates within porphyrin-containing compound metabolism; protoporphyrin-IX biosynthesis; 5-aminolevulinate from L-glutamyl-tRNA(Glu): step 1/2. Its function is as follows. Catalyzes the NADPH-dependent reduction of glutamyl-tRNA(Glu) to glutamate 1-semialdehyde (GSA). The protein is Glutamyl-tRNA reductase of Kocuria rhizophila (strain ATCC 9341 / DSM 348 / NBRC 103217 / DC2201).